A 275-amino-acid polypeptide reads, in one-letter code: Large ribosomal subunit protein uL2c (275 aa).

The interval 28–53 (TPTKSLTHANHRARGRNHSGSITTRW) is disordered.

This sequence belongs to the universal ribosomal protein uL2 family. As to quaternary structure, part of the 50S ribosomal subunit.

The protein localises to the plastid. It localises to the chloroplast. This chain is Large ribosomal subunit protein uL2c (rpl2), found in Nephroselmis olivacea (Green alga).